The following is a 560-amino-acid chain: MWCLSCFKPSTKHDPSEDRFEEETNIVTGISLYEDVILRQRRSEADQIEWAIQDSFNPQETSRCRQREEDDQIARGLQYVEETELDKSVVDEEDQQLSKIVEESLKEKGKSKQFEDDQVENDEQQALMVQESLYMVELSAQLEEDKNISTIPPLNEDAQLQKVIWESAKGKGQIEHFKDPVEEDGNLPRVDLNVNHPHSICDGCKSAIEYGRSVHALGVNWHPECFCCRYCDKPIAMHEFSNTKGRCHITCYERSHPNCHVCKKKFPGRKYKEHPFWKEKYCPFHEVDGTPKCCSCERLEPWGTKYVMLADNRWLCVKCMECAVMDTYECQPLHFEIREFFGSLNMKVEKEFPLLLVEKEALKKAEAQEKIDNQHGVVTRGICLSEGQIVNSVFKKPTMGPNGELVSLGTEPQKVVGGCEVTAILILYGLPRLLTGYILAHEMMHAWLRLNGYRNLKLELEEGICQVLGHMWLESQTYSSSAAASSASSSSRTPAANASKKGAQSDYEKKLVEFCKDQIETDDSPVYGVGFRKVNQMVSDSSLHKILKSIQHWTKPDSNL.

UIM domains are found at residues 43-62 (SEAD…QETS), 92-111 (EEDQ…KGKS), and 155-174 (NEDA…KGQI). Residues 199–269 (SICDGCKSAI…HVCKKKFPGR (71 aa)) enclose the LIM zinc-binding domain.

As to quaternary structure, interacts with ubiquitin.

Ubiquitin receptor that probably regulates developmental process. The protein is Protein DA1-related 7 (DAR7) of Arabidopsis thaliana (Mouse-ear cress).